We begin with the raw amino-acid sequence, 269 residues long: Glutamate racemase (269 aa).

Substrate contacts are provided by residues Asp-14–Ser-15 and Tyr-46–Ser-47. Cys-78 functions as the Proton donor/acceptor in the catalytic mechanism. Residue Asn-79 to Thr-80 participates in substrate binding. Residue Cys-189 is the Proton donor/acceptor of the active site. Position 190-191 (Thr-190–His-191) interacts with substrate.

It belongs to the aspartate/glutamate racemases family.

The catalysed reaction is L-glutamate = D-glutamate. It functions in the pathway cell wall biogenesis; peptidoglycan biosynthesis. Provides the (R)-glutamate required for cell wall biosynthesis. This Haemophilus influenzae (strain ATCC 51907 / DSM 11121 / KW20 / Rd) protein is Glutamate racemase.